A 41-amino-acid chain; its full sequence is Photosystem II reaction center protein X (41 aa).

The Lumenal segment spans residues 2–6 (TITPS). A helical transmembrane segment spans residues 7 to 29 (LKGFFIGLLSGAVVLGLTFAVLI). At 30–41 (AISQIDKVQRSL) the chain is on the cytoplasmic side.

It belongs to the PsbX family. Type 1 subfamily. PSII is composed of 1 copy each of membrane proteins PsbA, PsbB, PsbC, PsbD, PsbE, PsbF, PsbH, PsbI, PsbJ, PsbK, PsbL, PsbM, PsbT, PsbX, PsbY, PsbZ, Psb30/Ycf12, peripheral proteins PsbO, CyanoQ (PsbQ), PsbU, PsbV and a large number of cofactors. It forms dimeric complexes. Part of a photosystem II (PSII) assembly intermediate complex PSII-I; crystallized from a strain deleted of psbJ, it forms monomeric PSII before addition of the oxygen evolving complex. PSII-I includes 3 assembly factors not found in mature PSII (Psb27, Psb28 and Psb34). The cofactor is PSII binds multiple chlorophylls, carotenoids and specific lipids..

It is found in the cellular thylakoid membrane. Involved in the binding and/or turnover of quinones at the Q(B) site of photosystem II (PSII). PSII is a light-driven water plastoquinone oxidoreductase, using light energy to abstract electrons from H(2)O, generating a proton gradient subsequently used for ATP formation. The sequence is that of Photosystem II reaction center protein X from Thermosynechococcus vestitus (strain NIES-2133 / IAM M-273 / BP-1).